A 763-amino-acid chain; its full sequence is MSELLSFALFLASVLIYAWKAGRNTWWFAATLTVLGLFVVLNITLFASDYFTGDGINDAVLYTLTNSLTGAGVSKYILPGIGIVLGLTAVFGALGWILRRRRHHPHHFGYSLLALLLALGSVDASPAFRQITELVKSQSRDGDPDFAAYYKEPSKTIPDPKLNLVYIYGESLERTYFDNEAFPDLTPELGALKNEGLDFSHTQQLPGTDYTIAGMVASQCGIPLFAPFEGNASASVSSFFPQNICLGDILKNSGYQNYFVQGANLRFAGKDVFLKSHGFDHLYGSEELKSVVADPHYRNDWGFYDDTVLDEAWKKFEELSRSGQRFSLFTLTVDTHHPDGFISRTCNRKKYDFDGKPNQSFSAVSCSQENIATFINKIKASPWFKDTVIVVSSDHLAMNNTAWKYLNKQDRNNLFFVIRGDKPQQETLAVKRNTMDNGATVLDILGGDNYLGLGRSSLSGQSMSEIFLNIKEKTLAWKPDIIRLWKFPKEMKEFTIDQQKNMIAFSGSHFRLPLLLRVSDKRVEPLPESEYSAPLRFQLADFAPRDNFVWVDRCYKMAQLWAPELALSTDWCVSQGQLGGQQIVQHVDKTTWQGKTAFKDTVIDMARYKGNVDTLKIVDNDIRYKADSFIFNVAGAPEEVKQFSGISRPESWGRWSNAQLGDEVKIEYKHPLPKKFDLVITAKAYGNNASRPIPVRVGNEEQTLVLGNEVTTTTLHFDNPTDADTLVIVPPEPVSTNEGNILGHSPRKLGIGMVEIKVVEREG.

4 consecutive transmembrane segments (helical) span residues 1-21, 26-46, 77-97, and 108-128; these read MSEL…AWKA, WWFA…ITLF, ILPG…LGWI, and FGYS…SPAF.

Belongs to the OpgB family.

The protein localises to the cell inner membrane. It catalyses the reaction a phosphatidylglycerol + a membrane-derived-oligosaccharide D-glucose = a 1,2-diacyl-sn-glycerol + a membrane-derived-oligosaccharide 6-(glycerophospho)-D-glucose.. Its pathway is glycan metabolism; osmoregulated periplasmic glucan (OPG) biosynthesis. Transfers a phosphoglycerol residue from phosphatidylglycerol to the membrane-bound nascent glucan backbones. The chain is Phosphoglycerol transferase I from Escherichia coli O45:K1 (strain S88 / ExPEC).